Consider the following 469-residue polypeptide: MNPNQKIITIGSVSLTIATVCFLMQIAILVTTVTLHFKQHECDSPASNQVMPCEPIIIERNITEIVYLNNTTIEKEICPKVVEYRNWSKPQCQITGFAPFSKDNSIRLSAGGDIWVTREPYVSCDPVKCYQFALGQGTTLDNKHSNDTVHDRIPHRTLLMNELGVPFHLGTRQVCIAWSSSSCHDGKAWLHVCITGDDKNATASFIYDGRLVDSIGSWSQNILRTQESECVCINGTCTVVMTDGSASGRADTRILFIEEGKIVHISPLAGSAQHVEECSCYPRYPGVRCICRDNWKGSNRPVVDINMEDYSIDSSYVCSGLVGDTPRNDDRSSNSNCRNPNNERGTQGVKGWAFDNGNDLWMGRTISKDLRSGYETFKVIGGWSTPNSKSQINRQVIVDSDNRSGYSGIFSVEGKSCINRCFYVELIRGRKQETRVWWTSNSIVVFCGTSGTYGTGSWPDGANINFMPI.

Over 1–9 (MNPNQKIIT) the chain is Intravirion. Residues 10–30 (IGSVSLTIATVCFLMQIAILV) traverse the membrane as a helical segment. The segment at 11 to 33 (GSVSLTIATVCFLMQIAILVTTV) is involved in apical transport and lipid raft association. The Virion surface segment spans residues 31–469 (TTVTLHFKQH…DGANINFMPI (439 aa)). Positions 36–88 (HFKQHECDSPASNQVMPCEPIIIERNITEIVYLNNTTIEKEICPKVVEYRNWS) are hypervariable stalk region. Residues N61, N69, N70, and N86 are each glycosylated (N-linked (GlcNAc...) asparagine; by host). The tract at residues 91 to 469 (QCQITGFAPF…DGANINFMPI (379 aa)) is head of neuraminidase. 9 disulfide bridges follow: C92/C417, C124/C129, C175/C193, C183/C230, C232/C237, C278/C291, C280/C289, C318/C337, and C421/C447. R118 contributes to the substrate binding site. N146 carries N-linked (GlcNAc...) asparagine; by host glycosylation. The Proton donor/acceptor role is filled by D151. R152 provides a ligand contact to substrate. 2 N-linked (GlcNAc...) asparagine; by host glycosylation sites follow: N200 and N234. 276–277 (EE) is a binding site for substrate. R292 serves as a coordination point for substrate. Positions 293, 297, and 324 each coordinate Ca(2+). The interval 324 to 349 (DTPRNDDRSSNSNCRNPNNERGTQGV) is disordered. Residues 333–342 (SNSNCRNPNN) are compositionally biased toward low complexity. Ca(2+)-binding residues include G345, T346, and Q347. R371 serves as a coordination point for substrate. Residue N402 is glycosylated (N-linked (GlcNAc...) asparagine; by host). Y406 acts as the Nucleophile in catalysis.

Belongs to the glycosyl hydrolase 34 family. As to quaternary structure, homotetramer. It depends on Ca(2+) as a cofactor. N-glycosylated.

It is found in the virion membrane. The protein resides in the host apical cell membrane. The enzyme catalyses Hydrolysis of alpha-(2-&gt;3)-, alpha-(2-&gt;6)-, alpha-(2-&gt;8)- glycosidic linkages of terminal sialic acid residues in oligosaccharides, glycoproteins, glycolipids, colominic acid and synthetic substrates.. Inhibited by the neuraminidase inhibitors zanamivir (Relenza) and oseltamivir (Tamiflu). These drugs interfere with the release of progeny virus from infected cells and are effective against all influenza strains. Resistance to neuraminidase inhibitors is quite rare. Catalyzes the removal of terminal sialic acid residues from viral and cellular glycoconjugates. Cleaves off the terminal sialic acids on the glycosylated HA during virus budding to facilitate virus release. Additionally helps virus spread through the circulation by further removing sialic acids from the cell surface. These cleavages prevent self-aggregation and ensure the efficient spread of the progeny virus from cell to cell. Otherwise, infection would be limited to one round of replication. Described as a receptor-destroying enzyme because it cleaves a terminal sialic acid from the cellular receptors. May facilitate viral invasion of the upper airways by cleaving the sialic acid moieties on the mucin of the airway epithelial cells. Likely to plays a role in the budding process through its association with lipid rafts during intracellular transport. May additionally display a raft-association independent effect on budding. Plays a role in the determination of host range restriction on replication and virulence. Sialidase activity in late endosome/lysosome traffic seems to enhance virus replication. The protein is Neuraminidase of Aves (Human).